A 350-amino-acid polypeptide reads, in one-letter code: S-adenosylmethionine:tRNA ribosyltransferase-isomerase (350 aa).

It belongs to the QueA family. In terms of assembly, monomer.

Its subcellular location is the cytoplasm. The catalysed reaction is 7-aminomethyl-7-carbaguanosine(34) in tRNA + S-adenosyl-L-methionine = epoxyqueuosine(34) in tRNA + adenine + L-methionine + 2 H(+). It functions in the pathway tRNA modification; tRNA-queuosine biosynthesis. In terms of biological role, transfers and isomerizes the ribose moiety from AdoMet to the 7-aminomethyl group of 7-deazaguanine (preQ1-tRNA) to give epoxyqueuosine (oQ-tRNA). The chain is S-adenosylmethionine:tRNA ribosyltransferase-isomerase from Bacillus cereus (strain ZK / E33L).